The following is a 137-amino-acid chain: Glutamate mutase sigma subunit (137 aa).

In terms of domain architecture, B12-binding spans 3–137; the sequence is KKTIVLGVIG…ADMKEVLGVE (135 aa). Adenosylcob(III)alamin contacts are provided by residues 13 to 17, H16, 61 to 63, and 93 to 97; these read SDCHA, SSL, and NIVVG.

The protein belongs to the methylaspartate mutase GlmS subunit family. Heterotetramer composed of 2 epsilon subunits (GlmE) and 2 sigma subunits (GlmS). GlmE exists as a homodimer and GlmS as a monomer. Requires adenosylcob(III)alamin as cofactor.

The catalysed reaction is (2S,3S)-3-methyl-L-aspartate = L-glutamate. The protein operates within amino-acid degradation; L-glutamate degradation via mesaconate pathway; acetate and pyruvate from L-glutamate: step 1/4. In terms of biological role, catalyzes the carbon skeleton rearrangement of L-glutamate to L-threo-3-methylaspartate ((2S,3S)-3-methylaspartate). This Clostridium tetanomorphum protein is Glutamate mutase sigma subunit.